The sequence spans 611 residues: Aspartate--tRNA(Asp/Asn) ligase (611 aa).

Position 177 (E177) interacts with L-aspartate. The tract at residues 201–204 (QLFK) is aspartate. Position 223 (R223) interacts with L-aspartate. ATP contacts are provided by residues 223–225 (RDE) and Q232. H461 serves as a coordination point for L-aspartate. ATP is bound at residue E499. Residue R506 participates in L-aspartate binding. Residue 551 to 554 (GVDR) participates in ATP binding.

Belongs to the class-II aminoacyl-tRNA synthetase family. Type 1 subfamily. As to quaternary structure, homodimer.

The protein resides in the cytoplasm. The enzyme catalyses tRNA(Asx) + L-aspartate + ATP = L-aspartyl-tRNA(Asx) + AMP + diphosphate. Its function is as follows. Aspartyl-tRNA synthetase with relaxed tRNA specificity since it is able to aspartylate not only its cognate tRNA(Asp) but also tRNA(Asn). Reaction proceeds in two steps: L-aspartate is first activated by ATP to form Asp-AMP and then transferred to the acceptor end of tRNA(Asp/Asn). This chain is Aspartate--tRNA(Asp/Asn) ligase, found in Synechococcus sp. (strain WH7803).